The chain runs to 204 residues: Holliday junction branch migration complex subunit RuvA (204 aa).

Positions M1 to A64 are domain I. Residues Q65 to E143 are domain II. The interval S144–S155 is flexible linker. Residues H156 to L204 form a domain III region.

This sequence belongs to the RuvA family. As to quaternary structure, homotetramer. Forms an RuvA(8)-RuvB(12)-Holliday junction (HJ) complex. HJ DNA is sandwiched between 2 RuvA tetramers; dsDNA enters through RuvA and exits via RuvB. An RuvB hexamer assembles on each DNA strand where it exits the tetramer. Each RuvB hexamer is contacted by two RuvA subunits (via domain III) on 2 adjacent RuvB subunits; this complex drives branch migration. In the full resolvosome a probable DNA-RuvA(4)-RuvB(12)-RuvC(2) complex forms which resolves the HJ.

Its subcellular location is the cytoplasm. Its function is as follows. The RuvA-RuvB-RuvC complex processes Holliday junction (HJ) DNA during genetic recombination and DNA repair, while the RuvA-RuvB complex plays an important role in the rescue of blocked DNA replication forks via replication fork reversal (RFR). RuvA specifically binds to HJ cruciform DNA, conferring on it an open structure. The RuvB hexamer acts as an ATP-dependent pump, pulling dsDNA into and through the RuvAB complex. HJ branch migration allows RuvC to scan DNA until it finds its consensus sequence, where it cleaves and resolves the cruciform DNA. The sequence is that of Holliday junction branch migration complex subunit RuvA from Haemophilus influenzae (strain ATCC 51907 / DSM 11121 / KW20 / Rd).